The following is a 1201-amino-acid chain: Autophagy-related protein 11 (1201 aa).

Residues 90 to 109 (FPFLGRPSTPTKGSDNSTGT) form a disordered region. Positions 97–109 (STPTKGSDNSTGT) are enriched in polar residues. Residues 418-452 (LLRSDDMVRSLRDEKSKLEEKVKGSESRIRKLEDL) adopt a coiled-coil conformation. 2 disordered regions span residues 458–503 (HMGR…SEEK) and 525–545 (KLQK…QEVQ). The segment covering 485–499 (RRSSVSSRRMSSNQS) has biased composition (low complexity). Residues 525 to 542 (KLQKDAHAERQSNTDKIQ) show a composition bias toward basic and acidic residues. Coiled-coil stretches lie at residues 566 to 670 (RRFL…ALQA) and 710 to 828 (SAKA…WKER). Disordered regions lie at residues 1052-1076 (SMNG…DDEN) and 1115-1201 (DARG…LQGP). Polar residues predominate over residues 1133–1166 (RTLSKSLDSRRNSSNSKKGPATPSQRGNDSTTDL). The segment covering 1191–1201 (EEVRRDQLQGP) has biased composition (basic and acidic residues).

This sequence belongs to the ATG11 family. As to quaternary structure, homodimer and potential homooligomers.

The protein localises to the preautophagosomal structure membrane. Its function is as follows. Selective autophagy-specific protein required for pexophagy and mitophagy. In contrast to its Saccharomyces cerevisiae ATG11 ortholog, is not involved in non-selective autophagy nor in cytoplasm to vacuole transport (Cvt). In Aspergillus oryzae (strain ATCC 42149 / RIB 40) (Yellow koji mold), this protein is Autophagy-related protein 11.